Here is a 401-residue protein sequence, read N- to C-terminus: Formate-dependent phosphoribosylglycinamide formyltransferase (401 aa).

N(1)-(5-phospho-beta-D-ribosyl)glycinamide-binding positions include 22 to 23 (EL) and glutamate 82. ATP-binding positions include arginine 115, lysine 157, 162-167 (SSGKGQ), 197-200 (EGFI), and glutamate 205. In terms of domain architecture, ATP-grasp spans 120–315 (RLAAETLGLP…EFELHARAIL (196 aa)). Glutamate 274 and glutamate 286 together coordinate Mg(2+). N(1)-(5-phospho-beta-D-ribosyl)glycinamide is bound by residues aspartate 293, lysine 362, and 369 to 370 (RR).

Belongs to the PurK/PurT family. Homodimer.

The catalysed reaction is N(1)-(5-phospho-beta-D-ribosyl)glycinamide + formate + ATP = N(2)-formyl-N(1)-(5-phospho-beta-D-ribosyl)glycinamide + ADP + phosphate + H(+). The protein operates within purine metabolism; IMP biosynthesis via de novo pathway; N(2)-formyl-N(1)-(5-phospho-D-ribosyl)glycinamide from N(1)-(5-phospho-D-ribosyl)glycinamide (formate route): step 1/1. Involved in the de novo purine biosynthesis. Catalyzes the transfer of formate to 5-phospho-ribosyl-glycinamide (GAR), producing 5-phospho-ribosyl-N-formylglycinamide (FGAR). Formate is provided by PurU via hydrolysis of 10-formyl-tetrahydrofolate. The sequence is that of Formate-dependent phosphoribosylglycinamide formyltransferase from Cupriavidus pinatubonensis (strain JMP 134 / LMG 1197) (Cupriavidus necator (strain JMP 134)).